The chain runs to 197 residues: Protein LURP-one-related 9 (197 aa).

Belongs to the LOR family.

Functionally, might be related to the phospholipid scramblase and tubby-like superfamily of membrane tethered transcription factors. The sequence is that of Protein LURP-one-related 9 from Arabidopsis thaliana (Mouse-ear cress).